A 387-amino-acid chain; its full sequence is Phosphoglycerate kinase (387 aa).

Substrate-binding positions include 21–23 (DLN), Arg-36, 59–62 (HLGR), Arg-113, and Arg-146. ATP is bound by residues Lys-197, Glu-314, and 340–343 (GGDT).

Belongs to the phosphoglycerate kinase family. As to quaternary structure, monomer.

The protein localises to the cytoplasm. The enzyme catalyses (2R)-3-phosphoglycerate + ATP = (2R)-3-phospho-glyceroyl phosphate + ADP. It functions in the pathway carbohydrate degradation; glycolysis; pyruvate from D-glyceraldehyde 3-phosphate: step 2/5. In Salmonella schwarzengrund (strain CVM19633), this protein is Phosphoglycerate kinase.